The chain runs to 966 residues: Probable transport protein MmpL11 (966 aa).

The next 12 membrane-spanning stretches (helical) occupy residues 13-33 (WLVF…AMTQ), 188-208 (IILM…IPLA), 214-234 (VVIT…SVFV), 235-255 (TSTV…FILM), 279-299 (GLAV…IYLI), 311-331 (AILA…AVLA), 373-393 (ALAA…MVLG), 527-547 (TQPL…LISI), 557-577 (VLMT…VFQW), 595-615 (VPPL…IFLL), 646-666 (AALI…PLVA), and 668-688 (IGVA…LVLV).

It belongs to the resistance-nodulation-cell division (RND) (TC 2.A.6) family. MmpL subfamily.

The protein localises to the cell membrane. This chain is Probable transport protein MmpL11 (mmpL11), found in Mycobacterium bovis (strain ATCC BAA-935 / AF2122/97).